The primary structure comprises 296 residues: 2-haloacid dehalogenase, configuration-inverting (296 aa).

Belongs to the HAD-like hydrolase superfamily. S-2-haloalkanoic acid dehalogenase family.

It catalyses the reaction an (S)-2-haloacid + H2O = a (2R)-2-hydroxycarboxylate + a halide anion + H(+). It carries out the reaction an (R)-2-haloacid + H2O = a (2S)-2-hydroxycarboxylate + a halide anion + H(+). Its function is as follows. Dehalogenates both (S)- and (R)-2-haloalkanoic acids to the corresponding (R)- and (S)-hydroxyalkanoic acids, respectively, with inversion of configuration at C-2. Acts on 2-haloalkanoic acids whose carbon chain lengths are five or less. The sequence is that of 2-haloacid dehalogenase, configuration-inverting (dhlC) from Alcaligenes xylosoxydans xylosoxydans (Achromobacter xylosoxidans).